The primary structure comprises 432 residues: Adenylosuccinate synthetase (432 aa).

Residues 13-19 (GDEGKGK) and 41-43 (GHT) contribute to the GTP site. Aspartate 14 serves as the catalytic Proton acceptor. The Mg(2+) site is built by aspartate 14 and glycine 41. IMP-binding positions include 14–17 (DEGK), 39–42 (NAGH), threonine 130, arginine 144, glutamine 225, threonine 240, and arginine 304. The active-site Proton donor is histidine 42. 300 to 306 (ATTGRRR) serves as a coordination point for substrate. Residues arginine 306, 332 to 334 (KLD), and 415 to 417 (STG) contribute to the GTP site.

Belongs to the adenylosuccinate synthetase family. In terms of assembly, homodimer. Requires Mg(2+) as cofactor.

The protein localises to the cytoplasm. It catalyses the reaction IMP + L-aspartate + GTP = N(6)-(1,2-dicarboxyethyl)-AMP + GDP + phosphate + 2 H(+). The protein operates within purine metabolism; AMP biosynthesis via de novo pathway; AMP from IMP: step 1/2. Functionally, plays an important role in the de novo pathway of purine nucleotide biosynthesis. Catalyzes the first committed step in the biosynthesis of AMP from IMP. This chain is Adenylosuccinate synthetase, found in Pectobacterium atrosepticum (strain SCRI 1043 / ATCC BAA-672) (Erwinia carotovora subsp. atroseptica).